Here is a 206-residue protein sequence, read N- to C-terminus: MIRYPNGKTFQPKHSVSSQNSQKRAPSYSNRGMTLEDDLNETNKYYLTNQIAVIHKKPTPVQIVNVHYPKRSAAVIKEAYFKQSSTTDYNGIYKGRYIDFEAKETKNKTSFPLQNFHDHQIEHMKQVKAQDGICFVIISAFDQVYFLEADKLFYFWDRKEKNGRKSIRKDELEETAYPISLGYAPRIDYISIIEQLYFSPSSGAKG.

Residues 1–34 (MIRYPNGKTFQPKHSVSSQNSQKRAPSYSNRGMT) form a disordered region. Residues 8–32 (KTFQPKHSVSSQNSQKRAPSYSNRG) are compositionally biased toward polar residues. 4 residues coordinate Mg(2+): Thr86, Asp88, Glu101, and Gln120.

Belongs to the RecU family. As to quaternary structure, homodimer. Interacts with RuvB. Mg(2+) is required as a cofactor.

It is found in the cytoplasm. It catalyses the reaction Endonucleolytic cleavage at a junction such as a reciprocal single-stranded crossover between two homologous DNA duplexes (Holliday junction).. In terms of biological role, has at least 2 separable functions; Holliday junction resolution with generation of monomeric chromosomes, and negative modulation of RecA activity. Endonuclease that resolves Holliday junction intermediates in genetic recombination. Cleaves mobile four-strand junctions by introducing symmetrical nicks in paired strands. Promotes annealing of linear ssDNA with homologous dsDNA. Required for DNA repair, homologous recombination and chromosome segregation. Partially inhibits the hydrolysis of dATP or rATP by RecA. Holliday junction resolution is stimulated by RuvB. In Bacillus subtilis (strain 168), this protein is Holliday junction resolvase RecU (recU).